A 101-amino-acid polypeptide reads, in one-letter code: NAD(P)H-quinone oxidoreductase subunit 4L, chloroplastic (101 aa).

Helical transmembrane passes span 2 to 22, 32 to 52, and 61 to 81; these read ILEH…YGLI, MCLE…SDFF, and IFCI…LAIV.

Belongs to the complex I subunit 4L family. NDH is composed of at least 16 different subunits, 5 of which are encoded in the nucleus.

The protein resides in the plastid. It is found in the chloroplast thylakoid membrane. It catalyses the reaction a plastoquinone + NADH + (n+1) H(+)(in) = a plastoquinol + NAD(+) + n H(+)(out). The catalysed reaction is a plastoquinone + NADPH + (n+1) H(+)(in) = a plastoquinol + NADP(+) + n H(+)(out). In terms of biological role, NDH shuttles electrons from NAD(P)H:plastoquinone, via FMN and iron-sulfur (Fe-S) centers, to quinones in the photosynthetic chain and possibly in a chloroplast respiratory chain. The immediate electron acceptor for the enzyme in this species is believed to be plastoquinone. Couples the redox reaction to proton translocation, and thus conserves the redox energy in a proton gradient. The polypeptide is NAD(P)H-quinone oxidoreductase subunit 4L, chloroplastic (Draba nemorosa (Woodland whitlowgrass)).